Reading from the N-terminus, the 349-residue chain is GMP reductase (349 aa).

Residue 108-131 (IDFLKIKKIFLLSSELKYICIDVA) participates in NADP(+) binding. Positions 181 and 183 each coordinate K(+). The Thioimidate intermediate role is filled by Cys186. 216-239 (IISDGGCTVSGDIAKAFGGGADFV) is a binding site for NADP(+).

It belongs to the IMPDH/GMPR family. GuaC type 1 subfamily. In terms of assembly, homotetramer.

The enzyme catalyses IMP + NH4(+) + NADP(+) = GMP + NADPH + 2 H(+). Functionally, catalyzes the irreversible NADPH-dependent deamination of GMP to IMP. It functions in the conversion of nucleobase, nucleoside and nucleotide derivatives of G to A nucleotides, and in maintaining the intracellular balance of A and G nucleotides. The polypeptide is GMP reductase (Buchnera aphidicola subsp. Acyrthosiphon pisum (strain Tuc7)).